An 833-amino-acid polypeptide reads, in one-letter code: DNA ligase (833 aa).

NAD(+) is bound by residues 35–39 (DADYD), 84–85 (SL), and Glu115. Lys117 serves as the catalytic N6-AMP-lysine intermediate. NAD(+) is bound by residues Arg138, Glu175, Lys292, and Lys316. Residues Cys410, Cys413, Cys428, and Cys434 each contribute to the Zn(2+) site. The BRCT domain occupies 750 to 833 (LQTGPLDGQT…AFLGDHGQQP (84 aa)).

Belongs to the NAD-dependent DNA ligase family. LigA subfamily. The cofactor is Mg(2+). Mn(2+) serves as cofactor.

The enzyme catalyses NAD(+) + (deoxyribonucleotide)n-3'-hydroxyl + 5'-phospho-(deoxyribonucleotide)m = (deoxyribonucleotide)n+m + AMP + beta-nicotinamide D-nucleotide.. Functionally, DNA ligase that catalyzes the formation of phosphodiester linkages between 5'-phosphoryl and 3'-hydroxyl groups in double-stranded DNA using NAD as a coenzyme and as the energy source for the reaction. It is essential for DNA replication and repair of damaged DNA. In Xanthomonas euvesicatoria pv. vesicatoria (strain 85-10) (Xanthomonas campestris pv. vesicatoria), this protein is DNA ligase.